A 254-amino-acid chain; its full sequence is MSLEPQNNLLANINTNSENLPENDVPMSITEHLEELRQRTVFVFIFFLLAATISFTQIKIIVEIFQAPAIGIKFLQLAPGEYFFSSIKIAIYCGIVATTPFGVYQVILYILPGLTNKERKVILPILIGSIVLFIVGGIFAYFVLAPAALNFLISYGADIVEPLWSFEQYFDFILLLLFSTGLAFEIPIIQLLLGISGTVSASQMLLAWRYIIIISTIIGAVLTPSTDPVTQIIMSSAVLALYFSGVIILFLLRK.

A run of 8 helical transmembrane segments spans residues V41 to I61, I64 to F84, I91 to L111, I125 to A145, P146 to F166, F172 to L192, M204 to P224, and I232 to L252.

The protein belongs to the TatC family.

The protein resides in the plastid. The protein localises to the chloroplast membrane. This is an uncharacterized protein from Porphyra purpurea (Red seaweed).